Reading from the N-terminus, the 151-residue chain is SsrA-binding protein (151 aa).

Residues Lys-132–Ile-151 are disordered.

This sequence belongs to the SmpB family.

Its subcellular location is the cytoplasm. In terms of biological role, required for rescue of stalled ribosomes mediated by trans-translation. Binds to transfer-messenger RNA (tmRNA), required for stable association of tmRNA with ribosomes. tmRNA and SmpB together mimic tRNA shape, replacing the anticodon stem-loop with SmpB. tmRNA is encoded by the ssrA gene; the 2 termini fold to resemble tRNA(Ala) and it encodes a 'tag peptide', a short internal open reading frame. During trans-translation Ala-aminoacylated tmRNA acts like a tRNA, entering the A-site of stalled ribosomes, displacing the stalled mRNA. The ribosome then switches to translate the ORF on the tmRNA; the nascent peptide is terminated with the 'tag peptide' encoded by the tmRNA and targeted for degradation. The ribosome is freed to recommence translation, which seems to be the essential function of trans-translation. This Lactobacillus gasseri (strain ATCC 33323 / DSM 20243 / BCRC 14619 / CIP 102991 / JCM 1131 / KCTC 3163 / NCIMB 11718 / NCTC 13722 / AM63) protein is SsrA-binding protein.